Reading from the N-terminus, the 579-residue chain is Moesin a (579 aa).

The FERM domain occupies 5–295 (ISVRVTTMDA…GNHELYMRRR (291 aa)). Residues 306–448 (KAQAKEEKNH…EDEALEWQTK (143 aa)) are a coiled coil. Disordered regions lie at residues 308 to 341 (QAKE…EKIE), 376 to 418 (EQER…EHLA), and 464 to 519 (KNKV…KNER). A compositionally biased stretch (basic and acidic residues) spans 376 to 400 (EQERKRAQEEAERLERERRLAEEAK). Positions 490–501 (AEASAELTSAAA) are enriched in low complexity. Residues 502–519 (YKDRSEEERMTEAEKNER) show a composition bias toward basic and acidic residues. Residues 517-551 (NERVQKHLLALTSELANARDETKKTQNDIIHAENV) are a coiled coil.

It is found in the cell membrane. Its subcellular location is the cell junction. In terms of biological role, positively regulates endothelial adherens junction formation and stabilization. Is thereby required for intersegmental vessel luminal membrane formation and stabilization during tubulogenesis in the early stages of development, independent of blood flow dynamics. This Danio rerio (Zebrafish) protein is Moesin a.